The following is a 1150-amino-acid chain: C5a peptidase (1150 aa).

The first 31 residues, 1–31 (MRKKQKLPFDKLAIALMSTSILLNAQSDIKA), serve as a signal peptide directing secretion. Positions 33–73 (TVTEDTPAAEQAVETPQPTAVSEEVPSSKETKTPQTPDNAE) are disordered. In terms of domain architecture, Peptidase S8 spans 99 to 581 (KATIRDLNDP…AGAVDAKKAS (483 aa)). Catalysis depends on charge relay system residues Asp130, His193, and Ser512. 2 stretches are compositionally biased toward basic and acidic residues: residues 1029 to 1054 (EGHS…KPEQ) and 1061 to 1073 (PDKK…EKDS). The interval 1029 to 1116 (EGHSNKPEQD…RDQLPTTNDK (88 aa)) is disordered. Repeat copies occupy residues 1034 to 1050 (KPEQ…KPEA), 1051 to 1067 (KPEQ…KPET), and 1068 to 1084 (KPEK…TPQK). The 3 X 17 AA tandem repeats stretch occupies residues 1034–1084 (KPEQDGSDQAPDKKPEAKPEQDGSGQTPDKKPETKPEKDSSGQTPGKTPQK). Over residues 1075–1089 (GQTPGKTPQKGQPSR) the composition is skewed to polar residues. Positions 1110 to 1114 (LPTTN) match the LPXTG sorting signal motif. Thr1113 carries the post-translational modification Pentaglycyl murein peptidoglycan amidated threonine. Residues 1114-1150 (NDKDTNRLHLLKLVMTTFFFGLVAHIFKTKRQKETKK) constitute a propeptide, removed by sortase.

The protein belongs to the peptidase S8 family. Cleaved by SpeB protease; leading to its degradation. Degradation by SpeB is probably strictly regulated to preserve integrity of C5a peptidase.

Its subcellular location is the secreted. The protein localises to the cell wall. It catalyses the reaction The primary cleavage site is at 67-His-|-Lys-68 in human C5a with a minor secondary cleavage site at 58-Ala-|-Ser-59.. Its function is as follows. This virulence factor of S.pyogenes specifically cleaves the human serum chemotaxin C5a at '68-Lys-|-Asp-69' bond near its C-terminus, destroying its ability to serve as a chemoattractant. This is C5a peptidase (scpA) from Streptococcus pyogenes serotype M18 (strain MGAS8232).